Reading from the N-terminus, the 334-residue chain is Glycerol-1-phosphate dehydrogenase [NAD(P)+] (334 aa).

NAD(+) contacts are provided by residues 77-81 (GRPID) and 99-102 (TTAS). Position 104 (Asp104) interacts with substrate. Residue Ser108 coordinates NAD(+). Residue Asp147 coordinates substrate. 2 residues coordinate Zn(2+): Asp147 and His225. His229 contacts substrate. A Zn(2+)-binding site is contributed by His246.

This sequence belongs to the glycerol-1-phosphate dehydrogenase family. Requires Zn(2+) as cofactor.

It is found in the cytoplasm. It carries out the reaction sn-glycerol 1-phosphate + NAD(+) = dihydroxyacetone phosphate + NADH + H(+). It catalyses the reaction sn-glycerol 1-phosphate + NADP(+) = dihydroxyacetone phosphate + NADPH + H(+). It functions in the pathway membrane lipid metabolism; glycerophospholipid metabolism. Catalyzes the NAD(P)H-dependent reduction of dihydroxyacetonephosphate (DHAP or glycerone phosphate) to glycerol 1-phosphate (G1P). The G1P thus generated is used as the glycerophosphate backbone of phospholipids in the cellular membranes of Archaea. The polypeptide is Glycerol-1-phosphate dehydrogenase [NAD(P)+] (Methanococcus maripaludis (strain DSM 14266 / JCM 13030 / NBRC 101832 / S2 / LL)).